Consider the following 305-residue polypeptide: Oxidoreductase OpS7 (305 aa).

This sequence belongs to the oxidoreductase OpS7 family.

It functions in the pathway secondary metabolite biosynthesis. In terms of biological role, oxidoreductase; part of the gene cluster that mediates the biosynthesis of the bibenzoquinone oosporein, a metabolite required for fungal virulence that acts by evading host immunity to facilitate fungal multiplication in insects. The non-reducing polyketide synthase OpS1 produces orsellinic acid by condensing acetyl-CoA with 3 malonyl-CoA units. Orsellinic acid is then hydroxylated to benzenetriol by the hydroxylase OpS4. The intermediate is oxidized either nonenzymatically to 5,5'-dideoxy-oosporein or enzymatically to benzenetetrol by the oxidoreductase OpS7. The latter is further dimerized to oosporein by the catalase OpS5. OpS6 probably functions en route for protecting cells against oxidative stress by scavenging any leaked free radical form of benzenetetrol by activating the thiol group of glutathione. This chain is Oxidoreductase OpS7, found in Beauveria bassiana (strain ARSEF 2860) (White muscardine disease fungus).